A 63-amino-acid polypeptide reads, in one-letter code: MKVTVDQDLCIACGTCIDLCPSVFDWDDEGLSHVIVDEVPEGAEDSCARESVNECPTEAIKEV.

A 4Fe-4S ferredoxin-type domain is found at 2 to 29; the sequence is KVTVDQDLCIACGTCIDLCPSVFDWDDE. Cys-10, Cys-13, Cys-16, and Cys-55 together coordinate [4Fe-4S] cluster.

[4Fe-4S] cluster serves as cofactor.

Ferredoxins are iron-sulfur proteins that transfer electrons in a wide variety of metabolic reactions. The polypeptide is Ferredoxin (Moorella thermoacetica (Clostridium thermoaceticum)).